The following is a 185-amino-acid chain: Threonylcarbamoyl-AMP synthase (185 aa).

Residues 4–185 form the YrdC-like domain; the sequence is SFRVQQAARE…LATGEVVRPG (182 aa).

It belongs to the SUA5 family. TsaC subfamily.

The protein resides in the cytoplasm. The catalysed reaction is L-threonine + hydrogencarbonate + ATP = L-threonylcarbamoyladenylate + diphosphate + H2O. Its function is as follows. Required for the formation of a threonylcarbamoyl group on adenosine at position 37 (t(6)A37) in tRNAs that read codons beginning with adenine. Catalyzes the conversion of L-threonine, HCO(3)(-)/CO(2) and ATP to give threonylcarbamoyl-AMP (TC-AMP) as the acyladenylate intermediate, with the release of diphosphate. In Pseudomonas putida (strain ATCC 47054 / DSM 6125 / CFBP 8728 / NCIMB 11950 / KT2440), this protein is Threonylcarbamoyl-AMP synthase.